We begin with the raw amino-acid sequence, 331 residues long: MNYFDLPKIDLHCHLDGSVRPQTIIDLADEQNLTLPSRDINVIKEMMVAPETCPNLDEYLKRFELPGMVMQTAEALERISFELFEDAANENVKYLEVRFGPLLHQVKGLSLDDIMDSVVRGMKRAEAQYDIHGNYILSILRTMPKDQIKAVLEAGAKHLNDGIVAFDLAGSEVPGFCHEFVPYAQYAKELGYRITIHAGEQGAGQNVYDAISLLGAERVGHGIFIHNHPEAYQLVKGEEVALETCPSSNVQTKAVNSLSEHPIKAFYKDGIAVTINTDNRTVSNTTMTDEVRKVVEAFELTEAEYFDIYTISVNNAFTSDAVKQHLLSFAQ.

Zn(2+) is bound by residues His-12 and His-14. Residues His-14, Asp-16, and Gly-170 each coordinate substrate. His-197 provides a ligand contact to Zn(2+). The active-site Proton donor is the Glu-200. Asp-278 is a binding site for Zn(2+).

It belongs to the metallo-dependent hydrolases superfamily. Adenosine and AMP deaminases family. Adenosine deaminase subfamily. The cofactor is Zn(2+).

It carries out the reaction adenosine + H2O + H(+) = inosine + NH4(+). It catalyses the reaction 2'-deoxyadenosine + H2O + H(+) = 2'-deoxyinosine + NH4(+). In terms of biological role, catalyzes the hydrolytic deamination of adenosine and 2-deoxyadenosine. The protein is Adenosine deaminase of Vibrio vulnificus (strain CMCP6).